We begin with the raw amino-acid sequence, 76 residues long: Conotoxin VnMEKL-012 (76 aa).

The N-terminal stretch at 1-18 (MKLTILFLVAAVLMSTQA) is a signal peptide. Residues 19-42 (LIQHDGEKSQKAKMKFLTARTLSA) constitute a propeptide that is removed on maturation. Disulfide bonds link C49-C65, C56-C70, and C64-C74.

It belongs to the conotoxin O2 superfamily. As to expression, expressed by the venom duct.

It is found in the secreted. The protein is Conotoxin VnMEKL-012 of Conus ventricosus (Mediterranean cone).